Consider the following 124-residue polypeptide: Putative membrane protein insertion efficiency factor (124 aa).

Belongs to the UPF0161 family.

Its subcellular location is the cell inner membrane. Could be involved in insertion of integral membrane proteins into the membrane. In Psychrobacter cryohalolentis (strain ATCC BAA-1226 / DSM 17306 / VKM B-2378 / K5), this protein is Putative membrane protein insertion efficiency factor.